A 232-amino-acid chain; its full sequence is Octanoyltransferase (232 aa).

The region spanning 43-231 is the BPL/LPL catalytic domain; the sequence is DQTPNYFLFV…HFTQLFDCTV (189 aa). Substrate-binding positions include 88 to 95, 160 to 162, and 173 to 175; these read RGGDITYH, ALG, and GFA. The Acyl-thioester intermediate role is filled by Cys191.

Belongs to the LipB family.

The protein localises to the cytoplasm. It carries out the reaction octanoyl-[ACP] + L-lysyl-[protein] = N(6)-octanoyl-L-lysyl-[protein] + holo-[ACP] + H(+). The protein operates within protein modification; protein lipoylation via endogenous pathway; protein N(6)-(lipoyl)lysine from octanoyl-[acyl-carrier-protein]: step 1/2. Its function is as follows. Catalyzes the transfer of endogenously produced octanoic acid from octanoyl-acyl-carrier-protein onto the lipoyl domains of lipoate-dependent enzymes. Lipoyl-ACP can also act as a substrate although octanoyl-ACP is likely to be the physiological substrate. The protein is Octanoyltransferase of Flavobacterium psychrophilum (strain ATCC 49511 / DSM 21280 / CIP 103535 / JIP02/86).